The chain runs to 327 residues: Phenylalanine--tRNA ligase alpha subunit (327 aa).

Residue glutamate 252 coordinates Mg(2+).

It belongs to the class-II aminoacyl-tRNA synthetase family. Phe-tRNA synthetase alpha subunit type 1 subfamily. In terms of assembly, tetramer of two alpha and two beta subunits. Requires Mg(2+) as cofactor.

The protein resides in the cytoplasm. The catalysed reaction is tRNA(Phe) + L-phenylalanine + ATP = L-phenylalanyl-tRNA(Phe) + AMP + diphosphate + H(+). In Hamiltonella defensa subsp. Acyrthosiphon pisum (strain 5AT), this protein is Phenylalanine--tRNA ligase alpha subunit.